The sequence spans 530 residues: UDP-glucuronosyltransferase 2B14 (530 aa).

The signal sequence occupies residues 1–24 (MSVKHVSVLLLLLQLSCCFRTGSC). N-linked (GlcNAc...) asparagine glycosylation is found at asparagine 134 and asparagine 316. The chain crosses the membrane as a helical span at residues 494 to 510 (VVGFLVSCAAFLIFLVI).

This sequence belongs to the UDP-glycosyltransferase family.

It localises to the microsome membrane. The protein resides in the endoplasmic reticulum membrane. The enzyme catalyses glucuronate acceptor + UDP-alpha-D-glucuronate = acceptor beta-D-glucuronoside + UDP + H(+). UDPGT is of major importance in the conjugation and subsequent elimination of potentially toxic xenobiotics and endogenous compounds. This is UDP-glucuronosyltransferase 2B14 (UGT2B14) from Oryctolagus cuniculus (Rabbit).